Reading from the N-terminus, the 197-residue chain is MNEIISAAVLLILIMDPLGNLPIFMSVLKHTEPKRRRAIMVRELLIALLVMLVFLFAGEKILAFLSLRAETVSISGGIILFLIAIKMIFPSASGNSSGLPAGEEPFIVPLAIPLVAGPTILATLMLLSHQYPNQMGHLVIALLLAWGGTFVILLQSSLFLRLLGEKGVNALERLMGLILVMMATQMFLDGIRMWMKG.

At 1-3 (MNE) the chain is on the periplasmic side. A helical membrane pass occupies residues 4 to 24 (IISAAVLLILIMDPLGNLPIF). The Cytoplasmic portion of the chain corresponds to 25-44 (MSVLKHTEPKRRRAIMVREL). A helical transmembrane segment spans residues 45 to 65 (LIALLVMLVFLFAGEKILAFL). Residues 66–71 (SLRAET) lie on the Periplasmic side of the membrane. The chain crosses the membrane as a helical span at residues 72–92 (VSISGGIILFLIAIKMIFPSA). The Cytoplasmic portion of the chain corresponds to 93-105 (SGNSSGLPAGEEP). Residues 106–126 (FIVPLAIPLVAGPTILATLML) traverse the membrane as a helical segment. Topologically, residues 127–138 (LSHQYPNQMGHL) are periplasmic. A helical transmembrane segment spans residues 139–159 (VIALLLAWGGTFVILLQSSLF). Topologically, residues 160–173 (LRLLGEKGVNALER) are cytoplasmic. A helical membrane pass occupies residues 174 to 194 (LMGLILVMMATQMFLDGIRMW). The Periplasmic segment spans residues 195-197 (MKG).

Belongs to the UPF0056 (MarC) family.

Its subcellular location is the cell inner membrane. This chain is UPF0056 inner membrane protein YhgN (yhgN), found in Escherichia coli O157:H7.